Reading from the N-terminus, the 320-residue chain is Acetyl-coenzyme A carboxylase carboxyl transferase subunit beta (320 aa).

Positions 25–294 (LWRKCPECGT…AIVGDLPAPD (270 aa)) constitute a CoA carboxyltransferase N-terminal domain. Positions 29, 32, 48, and 51 each coordinate Zn(2+). Residues 29–51 (CPECGTMLFHRELSDNLFVCISC) form a C4-type zinc finger. Residues 290 to 320 (LPAPDPAPATPEPQKAAPSAPAQDKPGAGRS) form a disordered region.

The protein belongs to the AccD/PCCB family. In terms of assembly, acetyl-CoA carboxylase is a heterohexamer composed of biotin carboxyl carrier protein (AccB), biotin carboxylase (AccC) and two subunits each of ACCase subunit alpha (AccA) and ACCase subunit beta (AccD). Requires Zn(2+) as cofactor.

Its subcellular location is the cytoplasm. It catalyses the reaction N(6)-carboxybiotinyl-L-lysyl-[protein] + acetyl-CoA = N(6)-biotinyl-L-lysyl-[protein] + malonyl-CoA. It functions in the pathway lipid metabolism; malonyl-CoA biosynthesis; malonyl-CoA from acetyl-CoA: step 1/1. Component of the acetyl coenzyme A carboxylase (ACC) complex. Biotin carboxylase (BC) catalyzes the carboxylation of biotin on its carrier protein (BCCP) and then the CO(2) group is transferred by the transcarboxylase to acetyl-CoA to form malonyl-CoA. The protein is Acetyl-coenzyme A carboxylase carboxyl transferase subunit beta of Dinoroseobacter shibae (strain DSM 16493 / NCIMB 14021 / DFL 12).